The sequence spans 206 residues: High-affinity nitrate transporter-activating protein 2.1 (206 aa).

A signal peptide spans 1–27; it reads MARLAGVAALSLVLVLLGAGVPRPAAA. Residues 180–200 form a helical membrane-spanning segment; it reads VAAGVFSTFSIAALAFFFVVE.

It belongs to the NAR2 family. As to quaternary structure, heterotetramer composed of two NRT2.1, NRT2.2 or NRT2.3 and two NAR2.1. Interacts with NRT2.1, NRT2.2 and isoform 1 of NRT2.3. As to expression, expressed in epidermal cells of primary and lateral roots, root-shoot junction zone, vascular tissues of adventitious root primordia, stems and coleoptiles of germinating seeds.

The protein localises to the cell membrane. In terms of biological role, acts as a dual component transporter with NTR2.1, NRT2.2 and NRT2.3. Required for high-affinity nitrate transport. Involved in the regulation of NRT2.1, NRT2.2 and NRT2.3 expression, and in both, HATS (high-affinity transport system) and LATS (low-affinity transport system) activities in plant roots. Imports nitrate with high affinity when expressed with NTR2.1, NTR2.2 or NTR2.3 in a heterologous system (Xenopus oocytes). This is High-affinity nitrate transporter-activating protein 2.1 (NAR2.1) from Oryza sativa subsp. japonica (Rice).